Consider the following 160-residue polypeptide: uncharacterized protein (160 aa).

This is an uncharacterized protein from Bacillus subtilis (strain 168).